Reading from the N-terminus, the 431-residue chain is MARCCRHLAVFLCVLLMLSLCKALSSNVDDGYGHEDGSFESDSLLKLNNDDVLSLISSDETTLEASTVSVSNFGAKGDGKTDDTQAFKKAWKKACSTNGVTTFLVPKGKTYLLKSTRFRGPCKSLRNFQILGTLSASTKRSDYKDKNHWLILEDVNNLSIDGGSTGIINGNGKTWWQNSCKIDKSKPCTKAPTALTLYNLKNLNVKNLRVKNAQQIQISIEKCNKVEVSNVEITAPGDSPNTDGIHITNTQNIRVSNSDIGTGDDCISIEDGTQNLQIFDLTCGPGHGISIGSLGDDNSKAYVSGINVDGAKFSESDNGVRIKTYQGGSGTAKNIKFQNIRMENVKNPIIIDQDYCDKDKCEDQESAVQVKNVVYKNISGTSATDVAITLNCSEKYPCQGIVLENVKIKGGTASCKNANVKNQGTVSPKCS.

A signal peptide spans 1 to 23; the sequence is MARCCRHLAVFLCVLLMLSLCKA. 2 PbH1 repeats span residues 223–249 and 250–271; these read CNKVEVSNVEITAPGDSPNTDGIHITN and TQNIRVSNSDIGTGDDCISIED. Asp-264 (proton donor) is an active-site residue. Residue His-287 is part of the active site. 3 PbH1 repeats span residues 303–324, 332–353, and 398–420; these read VSGINVDGAKFSESDNGVRIKT, AKNIKFQNIRMENVKNPIIIDQ, and CQGIVLENVKIKGGTASCKNANV.

Belongs to the glycosyl hydrolase 28 family. Expressed in flower buds and siliques, in the dehiscence zone of anthers (stomium cells) and maturing siliques. Expressed in stigma during pollen tube growth. Not expressed in seeds or in the floral part or leaf abscission zone but found at the junction between the seed and the funiculus at the site of seed abscission.

The protein localises to the secreted. Its subcellular location is the cell wall. It is found in the cytoplasm. It catalyses the reaction (1,4-alpha-D-galacturonosyl)n+m + H2O = (1,4-alpha-D-galacturonosyl)n + (1,4-alpha-D-galacturonosyl)m.. Its function is as follows. Polygalacturonase involved in cell separation in the final stages of pod shatter and in anther dehiscence. Not involved in floral organ abscission. The sequence is that of Polygalacturonase ADPG1 (ADPG1) from Arabidopsis thaliana (Mouse-ear cress).